Consider the following 705-residue polypeptide: Bifunctional arginine dihydrolase/ornithine cyclodeaminase ArgZ (705 aa).

An arginine dihydrolase region spans residues 10–269; it reads CPPDHYDVDY…GAAKCLTLRV (260 aa). L-arginine contacts are provided by Asn-22, Asn-71, Arg-90, Arg-139, His-168, Asp-170, Ala-258, and Cys-264. Asn-22, Asn-71, Arg-90, Arg-139, and His-168 together coordinate L-ornithine. His-168 functions as the Proton donor/acceptor in the catalytic mechanism. Ala-258 and Cys-264 together coordinate L-ornithine. Cys-264 functions as the Nucleophile in the catalytic mechanism. Residues 285–695 are ornithine cyclodeaminase; the sequence is SRVIRMEGHL…SLLVRQLQQL (411 aa). Asn-525, Ala-526, Asp-604, Ser-636, Met-637, Leu-638, His-639, Asp-657, Asp-680, and Val-681 together coordinate NAD(+).

The protein in the N-terminal section; belongs to the DDAH family. In the C-terminal section; belongs to the AgrE/ArgZ ornithine cyclodeaminase family. As to quaternary structure, homotetramer. NAD(+) is required as a cofactor.

It catalyses the reaction L-arginine + 2 H2O + 2 H(+) = L-ornithine + 2 NH4(+) + CO2. It carries out the reaction L-ornithine = L-proline + NH4(+). With respect to regulation, arginine dihydrolase activity does not require a metal cofactor. In terms of biological role, bifunctional enzyme involved in a cyanobacterial arginine utilization pathway that enables cellular adaptation to nitrogen fluctuations. Catalyzes the hydrolysis of arginine to ornithine, with the release of ammonia and carbon dioxide. Then, probably catalyzes the conversion of ornithine to proline, with the release of ammonia. Is highly specific for arginine and cannot hydrolyze citrulline, dimethylarginine and other amino acids. The chain is Bifunctional arginine dihydrolase/ornithine cyclodeaminase ArgZ from Synechocystis sp. (strain ATCC 27184 / PCC 6803 / Kazusa).